The chain runs to 604 residues: Ras guanine nucleotide exchange factor H (604 aa).

Residues 1-26 (MSNTNINVQSSTPKKSLGSSQYSLAG) are compositionally biased toward polar residues. The segment at 1–61 (MSNTNINVQS…QENSIDDSGS (61 aa)) is disordered. The span at 27-49 (SSSSNLNNINNNNNNNNNNNNNS) shows a compositional bias: low complexity. Residues 50 to 61 (TGQENSIDDSGS) are compositionally biased toward polar residues. A LisH domain is found at 115–147 (NDTMLLKLIMQYFHEENLTTSLKKIQEETKVQF). The N-terminal Ras-GEF domain occupies 221–335 (PDGTIKAATF…AVINLKIENY (115 aa)). Positions 365 to 591 (DEEEIARQLC…EQPQLTLDLS (227 aa)) constitute a Ras-GEF domain.

As to quaternary structure, component of the Sca1 complex composed of at least gefA, gefH, scaA, phr, and the protein phosphatase 2A subunits pppA and pho2B. Interacts directly with gefA and phr.

The protein resides in the cell membrane. Functionally, promotes the exchange of Ras-bound GDP by GTP. Component of the Sca1 complex, a regulator of cell motility, chemotaxis and signal relay. The Sca1 complex is recruited to the plasma membrane in a chemoattractant- and F-actin-dependent manner and is enriched at the leading edge of chemotaxing cells where it regulates F-actin dynamics and signal relay by controlling the activation of rasC and the downstream target of rapamycin complex 2 (TORC2)-Akt/protein kinase B (PKB) pathway. This is Ras guanine nucleotide exchange factor H (gefH) from Dictyostelium discoideum (Social amoeba).